We begin with the raw amino-acid sequence, 414 residues long: FAD-dependent monooxygenase adaC (414 aa).

Residues Glu-32, Ala-43, Arg-115, Asp-325, and Gly-338 each contribute to the FAD site.

Belongs to the paxM FAD-dependent monooxygenase family. The cofactor is FAD.

It carries out the reaction 3-(2,4-dioxopentyl)-3,6,8,9-tetrahydroxy-1-oxo-1,2,3,4-tetrahydroanthracene-2-carboxyl-[ACP] + NADPH + O2 + H(+) = 3-(2,4-dioxopentyl)-2,3,6,8,9-pentahydroxy-1-oxo-1,2,3,4-tetrahydroanthracene-2-carboxyl-[ACP] + NADP(+) + H2O. Its pathway is secondary metabolite biosynthesis. Its function is as follows. FAD-dependent monooxygenase; part of the gene cluster that mediates the biosynthesis of the linear tetracyclic TAN-1612 neuropeptide Y receptor antagonist. The decaketide backbone of TAN-1612 is synthesized by the non-reducing polyketide synthase adaA via condensation of one acetyl-CoA starter unit with 9 malonyl-CoA units. The FAD-dependent monooxygenase adaC then performs hydroxylation at C2 while the polaketide chain is still attached to the NRPKS adaA. The alpha-hydroxylation step at C2 appears to be crucial for the following C18-C1 Claisen cyclization and release of the C9-hydroxyl version of TAN-1612 from the NRPKS adaA, two steps performed by the lactamase-like protein adaB. Finally, the O-methyltransferase adaD performs the C9 O-methylation to complete the biosynthesis of TAN-1612. This Aspergillus niger protein is FAD-dependent monooxygenase adaC.